Here is a 152-residue protein sequence, read N- to C-terminus: Superoxide dismutase [Cu-Zn] (152 aa).

The Cu cation site is built by His45, His47, and His62. Cys56 and Cys145 are oxidised to a cystine. Positions 62, 70, 79, and 82 each coordinate Zn(2+). Residue His119 participates in Cu cation binding.

It belongs to the Cu-Zn superoxide dismutase family. In terms of assembly, homodimer. Cu cation is required as a cofactor. Zn(2+) serves as cofactor.

The protein localises to the cytoplasm. It catalyses the reaction 2 superoxide + 2 H(+) = H2O2 + O2. Functionally, destroys radicals which are normally produced within the cells and which are toxic to biological systems. This is Superoxide dismutase [Cu-Zn] (SODCC) from Pisum sativum (Garden pea).